Consider the following 181-residue polypeptide: NADH-quinone oxidoreductase subunit B (181 aa).

[4Fe-4S] cluster-binding residues include Cys45, Cys46, Cys111, and Cys140.

This sequence belongs to the complex I 20 kDa subunit family. As to quaternary structure, NDH-1 is composed of 14 different subunits. Subunits NuoB, C, D, E, F, and G constitute the peripheral sector of the complex. It depends on [4Fe-4S] cluster as a cofactor.

It localises to the cell inner membrane. It carries out the reaction a quinone + NADH + 5 H(+)(in) = a quinol + NAD(+) + 4 H(+)(out). Functionally, NDH-1 shuttles electrons from NADH, via FMN and iron-sulfur (Fe-S) centers, to quinones in the respiratory chain. The immediate electron acceptor for the enzyme in this species is believed to be a menaquinone. Couples the redox reaction to proton translocation (for every two electrons transferred, four hydrogen ions are translocated across the cytoplasmic membrane), and thus conserves the redox energy in a proton gradient. In Flavobacterium psychrophilum (strain ATCC 49511 / DSM 21280 / CIP 103535 / JIP02/86), this protein is NADH-quinone oxidoreductase subunit B.